Reading from the N-terminus, the 487-residue chain is Glutamyl-tRNA(Gln) amidotransferase subunit A (487 aa).

Residues Lys77 and Ser152 each act as charge relay system in the active site. The active-site Acyl-ester intermediate is Ser176.

The protein belongs to the amidase family. GatA subfamily. Heterotrimer of A, B and C subunits.

It carries out the reaction L-glutamyl-tRNA(Gln) + L-glutamine + ATP + H2O = L-glutaminyl-tRNA(Gln) + L-glutamate + ADP + phosphate + H(+). Its function is as follows. Allows the formation of correctly charged Gln-tRNA(Gln) through the transamidation of misacylated Glu-tRNA(Gln) in organisms which lack glutaminyl-tRNA synthetase. The reaction takes place in the presence of glutamine and ATP through an activated gamma-phospho-Glu-tRNA(Gln). The chain is Glutamyl-tRNA(Gln) amidotransferase subunit A from Lysinibacillus sphaericus (strain C3-41).